The sequence spans 162 residues: NADH-quinone oxidoreductase subunit I 1 (162 aa).

4Fe-4S ferredoxin-type domains lie at 44–74 (LRTYENGLEMCVGCELCQVACPAAAITVQAA) and 90–119 (YKYQVDLLRCIFCGMCEEACPTDCLHLTQE). Residues C54, C57, C60, C64, C99, C102, C105, and C109 each contribute to the [4Fe-4S] cluster site.

It belongs to the complex I 23 kDa subunit family. As to quaternary structure, NDH-1 is composed of 14 different subunits. Subunits NuoA, H, J, K, L, M, N constitute the membrane sector of the complex. [4Fe-4S] cluster is required as a cofactor.

It is found in the cell membrane. The catalysed reaction is a quinone + NADH + 5 H(+)(in) = a quinol + NAD(+) + 4 H(+)(out). Functionally, NDH-1 shuttles electrons from NADH, via FMN and iron-sulfur (Fe-S) centers, to quinones in the respiratory chain. The immediate electron acceptor for the enzyme in this species is believed to be ubiquinone. Couples the redox reaction to proton translocation (for every two electrons transferred, four hydrogen ions are translocated across the cytoplasmic membrane), and thus conserves the redox energy in a proton gradient. In Symbiobacterium thermophilum (strain DSM 24528 / JCM 14929 / IAM 14863 / T), this protein is NADH-quinone oxidoreductase subunit I 1.